We begin with the raw amino-acid sequence, 84 residues long: DNA-directed RNA polymerase subunit Rpo5 (84 aa).

This sequence belongs to the archaeal Rpo5/eukaryotic RPB5 RNA polymerase subunit family. In terms of assembly, part of the 13-subunit RNA polymerase.

It localises to the cytoplasm. It catalyses the reaction RNA(n) + a ribonucleoside 5'-triphosphate = RNA(n+1) + diphosphate. DNA-dependent RNA polymerase (RNAP) catalyzes the transcription of DNA into RNA using the four ribonucleoside triphosphates as substrates. Functionally, reconstitution experiments show this subunit is required for basic activity. This chain is DNA-directed RNA polymerase subunit Rpo5, found in Sulfolobus acidocaldarius (strain ATCC 33909 / DSM 639 / JCM 8929 / NBRC 15157 / NCIMB 11770).